Reading from the N-terminus, the 142-residue chain is Large ribosomal subunit protein uL13 (142 aa).

It belongs to the universal ribosomal protein uL13 family. Part of the 50S ribosomal subunit.

Its function is as follows. This protein is one of the early assembly proteins of the 50S ribosomal subunit, although it is not seen to bind rRNA by itself. It is important during the early stages of 50S assembly. The polypeptide is Large ribosomal subunit protein uL13 (Shigella boydii serotype 18 (strain CDC 3083-94 / BS512)).